Consider the following 151-residue polypeptide: IFN signaling evasion protein OPG029 (151 aa).

The protein belongs to the orthopoxvirus OPG029 family. In terms of assembly, interacts with host TANK, TBKBP1 and AZI2; these interactions prevent interferon production. Interacts with host STAT2.

Functionally, prevents establishment of cellular antiviral state by blocking virus-induced phosphorylation and activation of interferon regulatory factors 3/IRF3 and 7/IRF7, transcription factors critical for the induction of interferons alpha and beta. This blockage is produced through the inhibition of host TBK1, by binding host TBK1 adapter proteins TBKBP1 and AZI2, thereby producing a strong inhibition of the phosphorylation and activation of IRF3 and IRF7. Also acts as an inhibitor of the cellular response to type I IFN by interacting with host STAT2. Mechanistically, exerts its inhibitory effect after host ISGF3 complex (composed of STAT1, STAT2 and IRF9) binding to the interferon stimulated response element (ISRE). In Vaccinia virus (strain Western Reserve) (VACV), this protein is IFN signaling evasion protein OPG029 (OPG029).